Reading from the N-terminus, the 225-residue chain is Peptidyl-tRNA hydrolase (225 aa).

A tRNA-binding site is contributed by Tyr-27. The active-site Proton acceptor is the His-32. Tyr-78, Asn-80, and Asn-126 together coordinate tRNA. Residues 198–225 are disordered; that stretch reads FNPLDFSGPDRQDQPAPLNPAKTAPGES.

The protein belongs to the PTH family. Monomer.

It localises to the cytoplasm. The enzyme catalyses an N-acyl-L-alpha-aminoacyl-tRNA + H2O = an N-acyl-L-amino acid + a tRNA + H(+). Functionally, hydrolyzes ribosome-free peptidyl-tRNAs (with 1 or more amino acids incorporated), which drop off the ribosome during protein synthesis, or as a result of ribosome stalling. Catalyzes the release of premature peptidyl moieties from peptidyl-tRNA molecules trapped in stalled 50S ribosomal subunits, and thus maintains levels of free tRNAs and 50S ribosomes. This is Peptidyl-tRNA hydrolase from Synechococcus sp. (strain JA-3-3Ab) (Cyanobacteria bacterium Yellowstone A-Prime).